The sequence spans 342 residues: MSEESDSLRTSPSVASLSENELPPPPEPPGYVCSLTEDLVTKAREELQEKPEWRLRDVQALRDMVRKEYPNLSTSLDDAFLLRFLRARKFDYDRALQLLVNYHSCRRSWPEVFNNLKPSALKDVLASGFLTVLPHTDPRGCHVVCIRPDRWIPSNYPITENIRAIYLTLEKLIQSEETQVNGIVILADYKGVSLSKASHFGPFIAKKVIGILQDGFPIRIKAVHVVNEPRIFKGIFAIIKPFLKEKIANRFFLHGSDLNSLHTNLPRSILPKEYGGTAGELDTATWNAVLLASEDDFVKEFCQPVPTCDSILGQTLLPEGLTSDAQCDDSLRAVKSQLYSCY.

Residues 1–31 form a disordered region; that stretch reads MSEESDSLRTSPSVASLSENELPPPPEPPGY. The segment covering 8-19 has biased composition (polar residues); it reads LRTSPSVASLSE. The CRAL-TRIO domain occupies 117-282; that stretch reads KPSALKDVLA…EYGGTAGELD (166 aa).

May act as a protein that binds a hydrophobic ligand. This Pongo abelii (Sumatran orangutan) protein is Alpha-tocopherol transfer protein-like (TTPAL).